Here is a 425-residue protein sequence, read N- to C-terminus: Serine--tRNA ligase (425 aa).

T230–E232 is a binding site for L-serine. R261–E263 provides a ligand contact to ATP. L-serine is bound at residue E284. E348–S351 lines the ATP pocket. Residue S384 participates in L-serine binding.

It belongs to the class-II aminoacyl-tRNA synthetase family. Type-1 seryl-tRNA synthetase subfamily. As to quaternary structure, homodimer. The tRNA molecule binds across the dimer.

The protein resides in the cytoplasm. It carries out the reaction tRNA(Ser) + L-serine + ATP = L-seryl-tRNA(Ser) + AMP + diphosphate + H(+). It catalyses the reaction tRNA(Sec) + L-serine + ATP = L-seryl-tRNA(Sec) + AMP + diphosphate + H(+). Its pathway is aminoacyl-tRNA biosynthesis; selenocysteinyl-tRNA(Sec) biosynthesis; L-seryl-tRNA(Sec) from L-serine and tRNA(Sec): step 1/1. Functionally, catalyzes the attachment of serine to tRNA(Ser). Is also able to aminoacylate tRNA(Sec) with serine, to form the misacylated tRNA L-seryl-tRNA(Sec), which will be further converted into selenocysteinyl-tRNA(Sec). This is Serine--tRNA ligase from Streptococcus agalactiae serotype Ia (strain ATCC 27591 / A909 / CDC SS700).